Consider the following 171-residue polypeptide: Co-chaperone protein HscB homolog (171 aa).

Residues 2–74 enclose the J domain; it reads NHFELFGLPP…ISRAEYLLSQ (73 aa).

The protein belongs to the HscB family. Interacts with HscA and stimulates its ATPase activity.

In terms of biological role, co-chaperone involved in the maturation of iron-sulfur cluster-containing proteins. Seems to help targeting proteins to be folded toward HscA. This chain is Co-chaperone protein HscB homolog, found in Vibrio vulnificus (strain YJ016).